A 169-amino-acid polypeptide reads, in one-letter code: Shikimate kinase (169 aa).

12–17 (GAGKST) serves as a coordination point for ATP. Ser16 serves as a coordination point for Mg(2+). 3 residues coordinate substrate: Asp34, Arg58, and Gly80. Residue Arg117 coordinates ATP. Arg136 contacts substrate.

The protein belongs to the shikimate kinase family. Monomer. Requires Mg(2+) as cofactor.

It localises to the cytoplasm. It carries out the reaction shikimate + ATP = 3-phosphoshikimate + ADP + H(+). It participates in metabolic intermediate biosynthesis; chorismate biosynthesis; chorismate from D-erythrose 4-phosphate and phosphoenolpyruvate: step 5/7. Its function is as follows. Catalyzes the specific phosphorylation of the 3-hydroxyl group of shikimic acid using ATP as a cosubstrate. This chain is Shikimate kinase, found in Rhodococcus erythropolis (strain PR4 / NBRC 100887).